The primary structure comprises 1550 residues: DNA excision repair protein ERCC-6-like 2 (1550 aa).

The disordered stretch occupies residues 1 to 23; that stretch reads MDPSAPQPRAETSGKDIWHPGER. The span at 12–22 shows a compositional bias: basic and acidic residues; sequence TSGKDIWHPGE. The region spanning 135-321 is the Helicase ATP-binding domain; sequence YGHYIHGGGC…WCVMDWAVPG (187 aa). Residue 148-155 coordinates ATP; the sequence is DDMGLGKT. A DEAH box motif is present at residues 272 to 275; the sequence is DEAH. Residues 512 to 662 enclose the Helicase C-terminal domain; it reads VLQQLLNHCR…CVVVGSENAK (151 aa). Positions 785-796 match the Atypical PIP-box motif; that stretch reads PGQLTLLQCGFS. Disordered stretches follow at residues 808-848, 914-1002, and 1354-1410; these read DSDG…TSKH, FPDN…SSLR, and AETK…TRTG. Composition is skewed to basic and acidic residues over residues 830-840 and 933-953; these read EAKDAGCEKNQ and TEHT…DKRN. A phosphoserine mark is found at S980 and S983. The segment covering 992–1002 has biased composition (basic residues); it reads SRVRKRASSLR. Residues 1359–1388 show a composition bias toward polar residues; the sequence is SPVSSTQEIDSGKNSQASEDTVTSRSLNSE. Phosphoserine occurs at positions 1373 and 1376. Over residues 1389 to 1405 the composition is skewed to basic and acidic residues; that stretch reads SETRERRLENTMKDQQD.

This sequence belongs to the SNF2/RAD54 helicase family. Interacts with NEK6. Interacts (via an atypical PIP-box) with PCNA; this interaction facilitates cenrtomeric localization of ERCC6L2. Interacts with CYREN; this interaction is DNA independent. Interacts with XRCC6 and XRCC5. Post-translationally, phosphorylated by NEK6. In terms of tissue distribution, expressed in bone marrow (at protein level).

It is found in the nucleus. The protein resides in the cytoplasm. Its subcellular location is the cytoskeleton. The protein localises to the microtubule organizing center. It localises to the centrosome. It is found in the mitochondrion. The protein resides in the chromosome. Its subcellular location is the centromere. Functionally, promotes double-strand break (DSB) end-joining and facilitates programmed recombination by controlling how DNA ends are joined in a spatially oriented manner during repair. Also plays a role in DNA repair by restricting DNA end resection in double strand break (DSB) repair. Facilitates replication of complex DNA regions and regulates the maintenance of chromatin structure. The polypeptide is DNA excision repair protein ERCC-6-like 2 (Homo sapiens (Human)).